A 200-amino-acid chain; its full sequence is Dephospho-CoA kinase (200 aa).

The 198-residue stretch at 3–200 (VLGLTGSIGM…LSGKPAAATR (198 aa)) folds into the DPCK domain. Position 11-16 (11-16 (GMGKTT)) interacts with ATP.

This sequence belongs to the CoaE family.

The protein resides in the cytoplasm. It carries out the reaction 3'-dephospho-CoA + ATP = ADP + CoA + H(+). It participates in cofactor biosynthesis; coenzyme A biosynthesis; CoA from (R)-pantothenate: step 5/5. In terms of biological role, catalyzes the phosphorylation of the 3'-hydroxyl group of dephosphocoenzyme A to form coenzyme A. This chain is Dephospho-CoA kinase, found in Brucella abortus (strain 2308).